Here is a 602-residue protein sequence, read N- to C-terminus: Elongation factor 4 (602 aa).

Residues 7–189 (SQIRNFSIIA…AIVHRIPPPA (183 aa)) enclose the tr-type G domain. GTP-binding positions include 19 to 24 (DHGKST) and 136 to 139 (NKID).

This sequence belongs to the TRAFAC class translation factor GTPase superfamily. Classic translation factor GTPase family. LepA subfamily.

The protein resides in the cell inner membrane. It carries out the reaction GTP + H2O = GDP + phosphate + H(+). Required for accurate and efficient protein synthesis under certain stress conditions. May act as a fidelity factor of the translation reaction, by catalyzing a one-codon backward translocation of tRNAs on improperly translocated ribosomes. Back-translocation proceeds from a post-translocation (POST) complex to a pre-translocation (PRE) complex, thus giving elongation factor G a second chance to translocate the tRNAs correctly. Binds to ribosomes in a GTP-dependent manner. The chain is Elongation factor 4 from Gloeobacter violaceus (strain ATCC 29082 / PCC 7421).